The primary structure comprises 408 residues: GTPase Obg (408 aa).

The region spanning 1–159 (MKFVDEVSIR…RDLKMEMKVL (159 aa)) is the Obg domain. The tract at residues 127–150 (NTRFKSSTNRAPRQTTPGKPGDQR) is disordered. Over residues 129–143 (RFKSSTNRAPRQTTP) the composition is skewed to polar residues. An OBG-type G domain is found at 160-333 (ADVGLLGLPN…LSHDLMRYLE (174 aa)). Residues 166–173 (GLPNAGKS), 191–195 (FTTLV), 213–216 (DIPG), 283–286 (NKSD), and 314–316 (SAI) contribute to the GTP site. Residues Ser173 and Thr193 each coordinate Mg(2+). The interval 382 to 408 (HDIGDDDGWDDDFEDDEDGPEIIYVRD) is disordered. Residues 385–401 (GDDDGWDDDFEDDEDGP) show a composition bias toward acidic residues.

The protein belongs to the TRAFAC class OBG-HflX-like GTPase superfamily. OBG GTPase family. As to quaternary structure, monomer. The cofactor is Mg(2+).

The protein localises to the cytoplasm. Functionally, an essential GTPase which binds GTP, GDP and possibly (p)ppGpp with moderate affinity, with high nucleotide exchange rates and a fairly low GTP hydrolysis rate. Plays a role in control of the cell cycle, stress response, ribosome biogenesis and in those bacteria that undergo differentiation, in morphogenesis control. The sequence is that of GTPase Obg from Pseudomonas putida (strain GB-1).